The sequence spans 206 residues: MARYLGPKLKLSRREGTDLFLKSGVRAIDSKCKLETAPGQHGARKPRLSEYGTQLREKQKVRRIYGVLEKQFRNYYKEAARLKGNTGENLLQLLETRLDNVVYRMGFGATRAESRQLVSHKTVLVNGRVVNIPSFKVSANDVVSIREKSRTQARIKASLEVAAQREKPTWVEVDNTKMEGAFKRLPERSDLSADINEQLIVELYSK.

One can recognise an S4 RNA-binding domain in the interval 96 to 156 (TRLDNVVYRM…EKSRTQARIK (61 aa)).

It belongs to the universal ribosomal protein uS4 family. As to quaternary structure, part of the 30S ribosomal subunit. Contacts protein S5. The interaction surface between S4 and S5 is involved in control of translational fidelity.

In terms of biological role, one of the primary rRNA binding proteins, it binds directly to 16S rRNA where it nucleates assembly of the body of the 30S subunit. With S5 and S12 plays an important role in translational accuracy. The protein is Small ribosomal subunit protein uS4 of Shewanella denitrificans (strain OS217 / ATCC BAA-1090 / DSM 15013).